Reading from the N-terminus, the 363-residue chain is Putative glutamate--cysteine ligase 2 (363 aa).

It belongs to the glutamate--cysteine ligase type 2 family. YbdK subfamily.

It carries out the reaction L-cysteine + L-glutamate + ATP = gamma-L-glutamyl-L-cysteine + ADP + phosphate + H(+). ATP-dependent carboxylate-amine ligase which exhibits weak glutamate--cysteine ligase activity. This chain is Putative glutamate--cysteine ligase 2, found in Streptomyces coelicolor (strain ATCC BAA-471 / A3(2) / M145).